The primary structure comprises 273 residues: Putative phosphoenolpyruvate synthase regulatory protein (273 aa).

Residue 153–160 (GVSRSGKT) coordinates ADP.

It belongs to the pyruvate, phosphate/water dikinase regulatory protein family. PSRP subfamily.

The catalysed reaction is [pyruvate, water dikinase] + ADP = [pyruvate, water dikinase]-phosphate + AMP + H(+). The enzyme catalyses [pyruvate, water dikinase]-phosphate + phosphate + H(+) = [pyruvate, water dikinase] + diphosphate. Bifunctional serine/threonine kinase and phosphorylase involved in the regulation of the phosphoenolpyruvate synthase (PEPS) by catalyzing its phosphorylation/dephosphorylation. The polypeptide is Putative phosphoenolpyruvate synthase regulatory protein (Variovorax paradoxus (strain S110)).